We begin with the raw amino-acid sequence, 581 residues long: Dehydrocurvularin exporter (581 aa).

Positions Met1–Asn10 are enriched in polar residues. A disordered region spans residues Met1–Gly47. Asn11 is a glycosylation site (N-linked (GlcNAc...) asparagine). The segment covering Ser24–Asp39 has biased composition (basic and acidic residues). Transmembrane regions (helical) follow at residues Leu61–Ala81, Asp96–Gly116, Trp126–Pro146, Gly159–Pro179, Leu184–Gly204, Trp215–Leu235, Ile251–Thr271, Val288–Leu308, Ile330–Phe350, Val363–Ile383, Tyr392–Val412, Val424–Phe444, Ile456–Phe476, and Val527–Phe547. Residues Asp552–Val581 form a disordered region. A compositionally biased stretch (basic and acidic residues) spans Asp565–Val581.

This sequence belongs to the major facilitator superfamily. TCR/Tet family.

The protein resides in the cell membrane. Functionally, efflux pump that is probably involved in the export of dehydrocurvularin. The sequence is that of Dehydrocurvularin exporter from Alternaria cinerariae.